A 485-amino-acid polypeptide reads, in one-letter code: Glycogen synthase (485 aa).

K20 is an ADP-alpha-D-glucose binding site.

Belongs to the glycosyltransferase 1 family. Bacterial/plant glycogen synthase subfamily.

The enzyme catalyses [(1-&gt;4)-alpha-D-glucosyl](n) + ADP-alpha-D-glucose = [(1-&gt;4)-alpha-D-glucosyl](n+1) + ADP + H(+). It functions in the pathway glycan biosynthesis; glycogen biosynthesis. Synthesizes alpha-1,4-glucan chains using ADP-glucose. This Vibrio vulnificus (strain YJ016) protein is Glycogen synthase.